Consider the following 86-residue polypeptide: uncharacterized protein (86 aa).

This is an uncharacterized protein from Haemophilus phage HP1 (strain HP1c1) (Bacteriophage HP1).